Reading from the N-terminus, the 151-residue chain is Probable cGMP 3',5'-cyclic phosphodiesterase subunit delta (151 aa).

This sequence belongs to the PDE6D/unc-119 family. As to quaternary structure, interacts with Pde6.

Its subcellular location is the nucleus. It is found in the cytoplasm. The polypeptide is Probable cGMP 3',5'-cyclic phosphodiesterase subunit delta (Aedes aegypti (Yellowfever mosquito)).